Reading from the N-terminus, the 132-residue chain is MLLRMSEHRNEALGNYLEMRLKSSFLRGLGSWKSNPLRLGGWTILLTLTMGQGEPGGPQGDPWVPHELLLPSLCDSSHASSWGSGSITCAWRGGDSSSHPLVSGHILSNSPVAAVMCSSMGTHLSPFKGTLL.

In terms of tissue distribution, expressed in lymphoid tissues; Detected in spleen as well as in B-cell lines, NK cell lines and activated lymphocytes.

This Homo sapiens (Human) protein is HLA class I histocompatibility antigen protein P5 (HCP5).